The following is a 138-amino-acid chain: Membrane protein P8A7 (138 aa).

The next 4 membrane-spanning stretches (helical) occupy residues 12–30 (ILVI…YLFV), 32–56 (GLFH…IVLL), 71–90 (YTYW…LILG), and 93–118 (GFFL…LLGC).

The protein localises to the membrane. In Dictyostelium discoideum (Social amoeba), this protein is Membrane protein P8A7 (pmpA).